Reading from the N-terminus, the 506-residue chain is Maturase K (506 aa).

Belongs to the intron maturase 2 family. MatK subfamily.

The protein resides in the plastid. It localises to the chloroplast. Usually encoded in the trnK tRNA gene intron. Probably assists in splicing its own and other chloroplast group II introns. In Trifolium beckwithii (Beckwith's clover), this protein is Maturase K.